A 362-amino-acid chain; its full sequence is Chorismate synthase (362 aa).

2 residues coordinate NADP(+): Arg-47 and Arg-53. Residues 124-126, Gly-285, 300-304, and Arg-326 each bind FMN; these read RSS and KPTAT.

It belongs to the chorismate synthase family. As to quaternary structure, homotetramer. FMNH2 is required as a cofactor.

It carries out the reaction 5-O-(1-carboxyvinyl)-3-phosphoshikimate = chorismate + phosphate. Its pathway is metabolic intermediate biosynthesis; chorismate biosynthesis; chorismate from D-erythrose 4-phosphate and phosphoenolpyruvate: step 7/7. Its function is as follows. Catalyzes the anti-1,4-elimination of the C-3 phosphate and the C-6 proR hydrogen from 5-enolpyruvylshikimate-3-phosphate (EPSP) to yield chorismate, which is the branch point compound that serves as the starting substrate for the three terminal pathways of aromatic amino acid biosynthesis. This reaction introduces a second double bond into the aromatic ring system. The protein is Chorismate synthase of Cyanothece sp. (strain PCC 7425 / ATCC 29141).